Reading from the N-terminus, the 302-residue chain is MLILGVGYFLLGLILLYYGSDWFVLGSERIARHFNVSNFVIGATVMAIGTSLPEILTSAYASYMHAPGISIGNAIGSCICNIGLVLGLSAIISPIIVDKNLQKNILVYLLFVIFAAVIGIDGFSWIDGVVLLILFIIYLRWTVKNGSAEIEENNDKNNPSVVFSLVLLIIGLIGVLVGAELFVDGAKKIALALDISDKVIGFTLVAFGTSLPELMVSLAAAKRNLGGMVLGNVIGSNIADIGGALAVGSLFMHLPAENVQMAVLVIMSLLLYLFAKYSKIGRWQGILFLALYIIAIASLRMG.

9 helical membrane passes run 3–23 (ILGVGYFLLGLILLYYGSDWF), 39–59 (FVIGATVMAIGTSLPEILTSA), 77–97 (SCICNIGLVLGLSAIISPIIV), 106–126 (LVYLLFVIFAAVIGIDGFSWI), 128–148 (GVVLLILFIIYLRWTVKNGSA), 163–183 (FSLVLLIIGLIGVLVGAELFV), 199–219 (VIGFTLVAFGTSLPELMVSLA), 227–247 (GMVLGNVIGSNIADIGGALAV), and 254–274 (LPAENVQMAVLVIMSLLLYLF).

It belongs to the Ca(2+):cation antiporter (CaCA) (TC 2.A.19) family.

It is found in the cell membrane. This is an uncharacterized protein from Methanocaldococcus jannaschii (strain ATCC 43067 / DSM 2661 / JAL-1 / JCM 10045 / NBRC 100440) (Methanococcus jannaschii).